The primary structure comprises 90 residues: Putative membrane protein insertion efficiency factor (90 aa).

Residues 68-90 form a disordered region; that stretch reads VPAHFSLRRNPQYKEEDHRGKKR. The span at 79 to 90 shows a compositional bias: basic and acidic residues; sequence QYKEEDHRGKKR.

This sequence belongs to the UPF0161 family.

It is found in the cell membrane. In terms of biological role, could be involved in insertion of integral membrane proteins into the membrane. This Lactiplantibacillus plantarum (strain ATCC BAA-793 / NCIMB 8826 / WCFS1) (Lactobacillus plantarum) protein is Putative membrane protein insertion efficiency factor.